The sequence spans 417 residues: Serine/threonine-protein kinase PkaB (417 aa).

In terms of domain architecture, Protein kinase spans 9-270; that stretch reads YTAHQILGRG…ELSARLRELL (262 aa). ATP is bound by residues 15–23 and K36; that span reads LGRGSAGTV. D130 acts as the Proton acceptor in catalysis. Disordered stretches follow at residues 279-371 and 395-417; these read LDVD…RAAT and LATGGDEDGGGPQDTRNSAPAAP. Residues 280–293 show a composition bias toward acidic residues; that stretch reads DVDEPDAEQPEDAP. Composition is skewed to low complexity over residues 294–308 and 349–368; these read DASAASPAAPVSTAE and GTARAPRASGAPRPGSARNR. The span at 408–417 shows a compositional bias: polar residues; it reads DTRNSAPAAP.

Belongs to the protein kinase superfamily. Ser/Thr protein kinase family. Autophosphorylated mainly at Thr.

It catalyses the reaction L-seryl-[protein] + ATP = O-phospho-L-seryl-[protein] + ADP + H(+). The catalysed reaction is L-threonyl-[protein] + ATP = O-phospho-L-threonyl-[protein] + ADP + H(+). This Streptomyces coelicolor (strain ATCC BAA-471 / A3(2) / M145) protein is Serine/threonine-protein kinase PkaB (pkaB).